Here is a 518-residue protein sequence, read N- to C-terminus: Suppressor of hairless homolog (518 aa).

A disordered region spans residues 22–59; it reads ETDQQRSHVKERVNGTPNQNGGTSTSSKPRSVFENRPP. The segment covering 24–34 has biased composition (basic and acidic residues); the sequence is DQQRSHVKERV. Positions 36–50 are enriched in polar residues; that stretch reads GTPNQNGGTSTSSKP. 3 consecutive DNA-binding regions follow at residues 89-96, 223-232, and 296-328; these read KSYGNEKR, RLRSQTVSTR, and RKVD…ERMY. An IPT/TIG domain is found at 386–476; it reads PVVHSLQLNG…YPTNLTFTFT (91 aa).

The protein belongs to the Su(H) family. As to quaternary structure, interacts with activated Notch proteins.

It localises to the nucleus. In terms of biological role, transcriptional regulator that plays a central role in Notch signaling, a signaling pathway involved in cell-cell communication that regulates a broad spectrum of cell-fate determinations. Acts as a transcriptional repressor when it is not associated with Notch proteins. When associated with some Notch protein, it acts as a transcriptional activator that activates transcription of Notch target genes. This chain is Suppressor of hairless homolog (RBP-JK), found in Halocynthia roretzi (Sea squirt).